The chain runs to 216 residues: Large ribosomal subunit protein uL1 (216 aa).

It belongs to the universal ribosomal protein uL1 family.

The polypeptide is Large ribosomal subunit protein uL1 (Caenorhabditis elegans).